A 40-amino-acid chain; its full sequence is Sauvagin (40 aa).

Gln1 carries the post-translational modification Pyrrolidone carboxylic acid. Position 40 is an isoleucine amide (Ile40).

It belongs to the sauvagine/corticotropin-releasing factor/urotensin I family.

It localises to the secreted. Its function is as follows. Hypotensive and diuretic peptide. This is Sauvagin from Phyllomedusa sauvagei (Sauvage's leaf frog).